The following is a 314-amino-acid chain: Beta-ketoacyl-[acyl-carrier-protein] synthase III (314 aa).

Active-site residues include Cys112 and His241. The tract at residues Gln242–Arg246 is ACP-binding. The active site involves Asn271.

This sequence belongs to the thiolase-like superfamily. FabH family. Homodimer.

It is found in the cytoplasm. It carries out the reaction malonyl-[ACP] + acetyl-CoA + H(+) = 3-oxobutanoyl-[ACP] + CO2 + CoA. The protein operates within lipid metabolism; fatty acid biosynthesis. Functionally, catalyzes the condensation reaction of fatty acid synthesis by the addition to an acyl acceptor of two carbons from malonyl-ACP. Catalyzes the first condensation reaction which initiates fatty acid synthesis and may therefore play a role in governing the total rate of fatty acid production. Possesses both acetoacetyl-ACP synthase and acetyl transacylase activities. Its substrate specificity determines the biosynthesis of branched-chain and/or straight-chain of fatty acids. This chain is Beta-ketoacyl-[acyl-carrier-protein] synthase III, found in Vesicomyosocius okutanii subsp. Calyptogena okutanii (strain HA).